A 234-amino-acid polypeptide reads, in one-letter code: Orotidine 5'-phosphate decarboxylase (234 aa).

Substrate is bound by residues Asp14, Lys36, 63–72 (DLKFHDIPNT), Thr123, Arg184, Gln193, Gly213, and Arg214. Lys65 acts as the Proton donor in catalysis.

The protein belongs to the OMP decarboxylase family. Type 1 subfamily. In terms of assembly, homodimer.

The enzyme catalyses orotidine 5'-phosphate + H(+) = UMP + CO2. The protein operates within pyrimidine metabolism; UMP biosynthesis via de novo pathway; UMP from orotate: step 2/2. Functionally, catalyzes the decarboxylation of orotidine 5'-monophosphate (OMP) to uridine 5'-monophosphate (UMP). The polypeptide is Orotidine 5'-phosphate decarboxylase (Psychromonas ingrahamii (strain DSM 17664 / CCUG 51855 / 37)).